Reading from the N-terminus, the 589-residue chain is Protein FAM117B (589 aa).

The disordered stretch occupies residues 1-310 (MSQRVRRNGS…RDKERQSPFH (310 aa)). A Phosphoserine modification is found at Ser-10. A compositionally biased stretch (gly residues) spans 16 to 29 (SLGGGAVATAGGPG). Positions 45-56 (QQQQQQHGSPTR) are enriched in low complexity. Positions 57–85 (SGGGGGGNNNGGCCGGASGPAGGGGGGGP) are enriched in gly residues. Ser-106 carries the phosphoserine modification. The span at 108–136 (TVATQTGASATSTRGTSPTRSAAPGARGS) shows a compositional bias: low complexity. Residues 137–146 (PPRPPPPPPL) show a composition bias toward pro residues. 2 stretches are compositionally biased toward low complexity: residues 147 to 158 (LGTVSSPSSSPT) and 207 to 220 (PSSS…RTSS). A phosphoserine mark is found at Ser-210, Ser-219, Ser-220, and Ser-273. Residues 292–302 (RSKHSSRHHRD) show a composition bias toward basic residues. Phosphoserine occurs at positions 345 and 391. 2 disordered regions span residues 370 to 464 (QDIP…NNSY) and 556 to 589 (STNT…EAEG). The span at 384 to 397 (QRSSSTRSIDTQTP) shows a compositional bias: polar residues. Over residues 404–417 (SNNSSRSQSVSPTS) the composition is skewed to low complexity. A phosphoserine mark is found at Ser-449 and Ser-457.

This is Protein FAM117B (FAM117B) from Homo sapiens (Human).